Consider the following 405-residue polypeptide: Imidazolonepropionase (405 aa).

2 residues coordinate Fe(3+): histidine 72 and histidine 74. Zn(2+) is bound by residues histidine 72 and histidine 74. 4-imidazolone-5-propanoate is bound by residues arginine 81, tyrosine 144, and histidine 177. Tyrosine 144 contacts N-formimidoyl-L-glutamate. Histidine 242 is a Fe(3+) binding site. Residue histidine 242 participates in Zn(2+) binding. Glutamine 245 contributes to the 4-imidazolone-5-propanoate binding site. Aspartate 317 contributes to the Fe(3+) binding site. Residue aspartate 317 participates in Zn(2+) binding. 2 residues coordinate N-formimidoyl-L-glutamate: asparagine 319 and glycine 321. Threonine 322 provides a ligand contact to 4-imidazolone-5-propanoate.

Belongs to the metallo-dependent hydrolases superfamily. HutI family. The cofactor is Zn(2+). Requires Fe(3+) as cofactor.

It localises to the cytoplasm. It catalyses the reaction 4-imidazolone-5-propanoate + H2O = N-formimidoyl-L-glutamate. It functions in the pathway amino-acid degradation; L-histidine degradation into L-glutamate; N-formimidoyl-L-glutamate from L-histidine: step 3/3. In terms of biological role, catalyzes the hydrolytic cleavage of the carbon-nitrogen bond in imidazolone-5-propanoate to yield N-formimidoyl-L-glutamate. It is the third step in the universal histidine degradation pathway. The sequence is that of Imidazolonepropionase from Klebsiella pneumoniae (strain 342).